The following is a 213-amino-acid chain: Ribosomal RNA small subunit methyltransferase G (213 aa).

Residues G81, L86, V132–E133, and R147 each bind S-adenosyl-L-methionine.

The protein belongs to the methyltransferase superfamily. RNA methyltransferase RsmG family.

It localises to the cytoplasm. It carries out the reaction guanosine(527) in 16S rRNA + S-adenosyl-L-methionine = N(7)-methylguanosine(527) in 16S rRNA + S-adenosyl-L-homocysteine. In terms of biological role, specifically methylates the N7 position of guanine in position 527 of 16S rRNA. This is Ribosomal RNA small subunit methyltransferase G from Mannheimia succiniciproducens (strain KCTC 0769BP / MBEL55E).